Here is a 329-residue protein sequence, read N- to C-terminus: Glutamine synthetase (329 aa).

Positions 4 to 86 (YKLEYIWLDA…VMCEVMMPDA (83 aa)) constitute a GS beta-grasp domain. Positions 89–329 (PHASNTRATV…GDPYQMLLSS (241 aa)) constitute a GS catalytic domain. Residues E109 and E111 each coordinate Mg(2+). Residue E167 coordinates ATP. Mg(2+) is bound by residues E172 and E179. E278 is an L-glutamate binding site.

This sequence belongs to the glutamine synthetase family. Homooctamer and homotetramer. Mg(2+) is required as a cofactor.

It localises to the cytoplasm. It carries out the reaction L-glutamate + NH4(+) + ATP = L-glutamine + ADP + phosphate + H(+). Functionally, catalyzes the ATP-dependent biosynthesis of glutamine from glutamate and ammonia. The sequence is that of Glutamine synthetase from Rhizobium meliloti (Ensifer meliloti).